We begin with the raw amino-acid sequence, 245 residues long: 1-(5-phosphoribosyl)-5-[(5-phosphoribosylamino)methylideneamino] imidazole-4-carboxamide isomerase (245 aa).

Residue Asp7 is the Proton acceptor of the active site. The active-site Proton donor is Asp129.

It belongs to the HisA/HisF family.

The protein localises to the cytoplasm. It catalyses the reaction 1-(5-phospho-beta-D-ribosyl)-5-[(5-phospho-beta-D-ribosylamino)methylideneamino]imidazole-4-carboxamide = 5-[(5-phospho-1-deoxy-D-ribulos-1-ylimino)methylamino]-1-(5-phospho-beta-D-ribosyl)imidazole-4-carboxamide. It functions in the pathway amino-acid biosynthesis; L-histidine biosynthesis; L-histidine from 5-phospho-alpha-D-ribose 1-diphosphate: step 4/9. The protein is 1-(5-phosphoribosyl)-5-[(5-phosphoribosylamino)methylideneamino] imidazole-4-carboxamide isomerase of Salmonella choleraesuis (strain SC-B67).